We begin with the raw amino-acid sequence, 504 residues long: Alpha,alpha-trehalose-phosphate synthase [UDP-forming] (504 aa).

Positions 97 and 151 each coordinate D-glucose 6-phosphate. UDP contacts are provided by arginine 287 and lysine 292. UDP-alpha-D-glucose is bound by residues arginine 287 and lysine 292. Arginine 325 is a D-glucose 6-phosphate binding site. UDP-alpha-D-glucose is bound at residue 386–394 (DGMNLVSYE). 390–394 (LVSYE) is a binding site for UDP. Residues 482 to 504 (AGKLPTKETPVNGETSKLETSSQ) are disordered. Residues 493–504 (NGETSKLETSSQ) are compositionally biased toward polar residues.

This sequence belongs to the glycosyltransferase 20 family.

The enzyme catalyses D-glucose 6-phosphate + UDP-alpha-D-glucose = alpha,alpha-trehalose 6-phosphate + UDP + H(+). The protein operates within carbohydrate biosynthesis. Its function is as follows. Synthase catalytic subunit of the trehalose synthase complex that catalyzes the production of trehalose from glucose-6-phosphate and UDP-alpha-D-glucose in a two step process. The polypeptide is Alpha,alpha-trehalose-phosphate synthase [UDP-forming] (tpsA) (Emericella nidulans (strain FGSC A4 / ATCC 38163 / CBS 112.46 / NRRL 194 / M139) (Aspergillus nidulans)).